We begin with the raw amino-acid sequence, 345 residues long: Ubiquitin-associated domain-containing protein 2 (345 aa).

A signal peptide spans 1 to 39; that stretch reads MFTSTGSSGLYKAPLSKSLLLVPSALSLLLTLLLPHCQK. Residues 40–91 are Extracellular-facing; the sequence is FFVYDLHAVKHDLQIWRLICGRIICLDLKDAFCSGLLIYNFRIFERRYGSRK. The chain crosses the membrane as a helical span at residues 92–112; that stretch reads FASFLLGSWVLSALFDFILVE. At 113 to 125 the chain is on the cytoplasmic side; the sequence is AVQYSLGVTVASN. Residues 126–146 form a helical membrane-spanning segment; sequence LPSGFLAPVFALFVPFHCSIP. The Extracellular segment spans residues 147–163; that stretch reads RVQVAQILGPLSITNKT. N-linked (GlcNAc...) asparagine glycosylation occurs at asparagine 161. The helical transmembrane segment at 164–184 threads the bilayer; sequence LIYILGLQLFTSGSYIWIVAM. Residues 185-345 are Cytoplasmic-facing; it reads SGLISGMCYD…NVATNFLLQH (161 aa). The tract at residues 287–306 is disordered; it reads NINYQDGPRSEQRASPPLEV. In terms of domain architecture, UBA spans 305 to 345; it reads EVSEEQVARLMEMGFSRGDALEALRASNNDLNVATNFLLQH.

As to quaternary structure, interacts with LMBR1L, FAF2, AMFR and VCP.

Its subcellular location is the endoplasmic reticulum membrane. Its function is as follows. Restricts trafficking of FAF2 from the endoplasmic reticulum to lipid droplets. In association with LMBR1L and E3 ubiquitin-protein ligase AMFR, negatively regulates the canonical Wnt signaling pathway in the lymphocytes by promoting the ubiquitin-mediated degradation of CTNNB1 and Wnt receptors FZD6 and LRP6. The protein is Ubiquitin-associated domain-containing protein 2 (Ubac2) of Mus musculus (Mouse).